Here is a 106-residue protein sequence, read N- to C-terminus: Small ribosomal subunit protein uS10 (106 aa).

It belongs to the universal ribosomal protein uS10 family. In terms of assembly, part of the 30S ribosomal subunit.

Its function is as follows. Involved in the binding of tRNA to the ribosomes. This Prochlorococcus marinus (strain MIT 9515) protein is Small ribosomal subunit protein uS10.